A 478-amino-acid chain; its full sequence is Proline--tRNA ligase (478 aa).

Belongs to the class-II aminoacyl-tRNA synthetase family. ProS type 3 subfamily. In terms of assembly, homodimer.

The protein resides in the cytoplasm. The catalysed reaction is tRNA(Pro) + L-proline + ATP = L-prolyl-tRNA(Pro) + AMP + diphosphate. Catalyzes the attachment of proline to tRNA(Pro) in a two-step reaction: proline is first activated by ATP to form Pro-AMP and then transferred to the acceptor end of tRNA(Pro). This is Proline--tRNA ligase from Clostridium botulinum (strain ATCC 19397 / Type A).